The sequence spans 457 residues: Putative metabolite transport protein YwtG (457 aa).

Transmembrane regions (helical) follow at residues 7–27 (IWLY…TGVI), 38–58 (LGLN…GAIL), 75–95 (AIMA…LAPN), 97–117 (GVMV…TTIV), 136–156 (LNQL…YIFA), 163–183 (WMLG…LFMP), 240–260 (ALIA…NTII), 276–296 (ASIL…LVAI), 309–329 (LFGN…NLFF), 340–360 (VICL…VVWV), 377–397 (VSTL…PILM), and 400–420 (IGIS…FLFV). Residues 438–457 (DLRDKNGQGGAAGKQQTVGT) form a disordered region.

The protein belongs to the major facilitator superfamily. Sugar transporter (TC 2.A.1.1) family.

It is found in the cell membrane. The protein is Putative metabolite transport protein YwtG (ywtG) of Bacillus subtilis (strain 168).